The following is a 649-amino-acid chain: MSSFGIGKTKEVIFSMEEGSVKMFLRGRPVPMLIPDELAPTYSLDTRSELPSSRLKLDWVYGYRGRDCRANLYLLPTGEVVYFVASVAVLYSVEEQRQRHYLGHNDDIKCLAVHPDMVTIATGQVAGTTKEGKPLPPHVRVWDSVSLSTLHVLGLGVFDRAVCCVAFSKSNGGNLLCAVDESNDHVLSVWDWAKESKVVDSKCSNEAVLVATFHPTDPSLLITCGKSHIYFWSLEGGSLSKRQGLFEKHEKPKYVLCVTFLEGGDVVTGDSGGNLYVWGKGGNRITQEVQGAHDGGVFALCALRDGTLVSGGGRDRRVVLWGSDYSKVQEVEVPEDFGPVRTVAEGRGDTLYVGTTRNSILLGSVHTGFSLLVQGHVEELWGLATHPSRAQFVTCGQDKLVHLWSSETHQPVWSRSIEDPARSAGFHPSGSVLAVGTVTGRWLLLDTETHDLVAIHTDGNEQISVVSFSPDGAYLAVGSHDNLVYVYTVDQGGRKVSRLGKCSGHSSFITHLDWAQDSTCFVTNSGDYEILYWDPVTCKQITSADTVRNVEWATATCVLGFGVFGIWPEGADGTDINAVARSHDGKLLVSADDFGKVHLFSYPCCQPRALSHKYGGHSSHVTNVAFLWDDSMALTTGGKDTSVLQWRVA.

Residues 10–649 (KEVIFSMEEG…DTSVLQWRVA (640 aa)) form a tandem atypical propeller in EMLs region. WD repeat units follow at residues 56 to 93 (KLDW…LYSV), 97 to 144 (RQRH…VWDS), 151 to 192 (HVLG…VWDW), 195 to 234 (ESKV…FWSL), 241 to 280 (KRQG…VWGK), 285 to 323 (ITQE…LWGS), 369 to 406 (FSLL…LWSS), 410 to 447 (QPVW…LLDT), 452 to 489 (LVAI…VYTV), 495 to 535 (KVSR…YWDP), 564 to 602 (FGIW…LFSY), and 609 to 648 (ALSH…QWRV). The stretch at 65–106 (GRDCRANLYLLPTGEVVYFVASVAVLYSVEEQRQRHYLGHND) forms a coiled coil.

This sequence belongs to the WD repeat EMAP family. Interacts with GRID2 and may also interact with GRID1. Interacts with EML3. Binds unpolymerized tubulins via its WD repeat region.

The protein resides in the cytoplasm. It localises to the cytoskeleton. It is found in the spindle. Its function is as follows. Tubulin binding protein that inhibits microtubule nucleation and growth, resulting in shorter microtubules. The polypeptide is Echinoderm microtubule-associated protein-like 2 (Eml2) (Mus musculus (Mouse)).